The sequence spans 92 residues: Small ribosomal subunit protein uS19 (92 aa).

Belongs to the universal ribosomal protein uS19 family.

In terms of biological role, protein S19 forms a complex with S13 that binds strongly to the 16S ribosomal RNA. In Trichormus variabilis (strain ATCC 29413 / PCC 7937) (Anabaena variabilis), this protein is Small ribosomal subunit protein uS19.